The primary structure comprises 453 residues: Plasmepsin II (453 aa).

The Cytoplasmic segment spans residues 1–37; sequence MDITVREHDFKHGFIKSNSTFDGLNIDNSKNKKKIQK. Positions 1–124 are excised as a propeptide; the sequence is MDITVREHDF…SGLTKTNYLG (124 aa). A helical; Signal-anchor for type II membrane protein membrane pass occupies residues 38–58; sequence GFQILYVLLFCSVMCGLFYYV. Over 59 to 453 the chain is Lumenal; the sequence is YENVWLQRDN…VGIALAKKNL (395 aa). The 308-residue stretch at 140–447 folds into the Peptidase A1 domain; sequence FYGDAEVGDN…DYDNHSVGIA (308 aa). Asp158 is an active-site residue. A disulfide bond links Cys171 and Cys176. Asp338 is a catalytic residue. The cysteines at positions 373 and 409 are disulfide-linked.

Belongs to the peptidase A1 family. Component of the hemozoin formation complex (HFC) composed of falcipains FP2A and/or FP2B, plasmepsins PMII, PMIII/HAP and PMIV, heme detoxifying protein HDP and falcilysin FLN. The HFC complex is involved in hemoglobin degradation and detoxification of heme in the food vacuole during the asexual blood stage. Not N-glycosylated. In terms of processing, proteolytically cleaved into the soluble active mature form in the digestive vacuole by cysteine protease falcipains; the process begins at the early ring stage. Proteolysis requires an acidic environment. In absence of falcipains, autoprocessing may serve as an alternate activation system.

Its subcellular location is the membrane. The protein resides in the vacuole lumen. It is found in the vacuole membrane. The catalysed reaction is Hydrolysis of the bonds linking certain hydrophobic residues in hemoglobin or globin. Also cleaves small molecules substrates such as Ala-Leu-Glu-Arg-Thr-Phe-|-Phe(NO2)-Ser-Phe-Pro-Thr.. Its activity is regulated as follows. Inhibited by pepstatin A. In terms of biological role, during the asexual blood stage, participates in initial cleavage of native host hemoglobin (Hb) resulting in Hb denaturation. May cleave preferentially denatured hemoglobin that has been cleaved by PMI. Digestion of host Hb is an essential step which provides the parasite with amino acids for protein synthesis, and regulates osmolarity. In Plasmodium falciparum (isolate HB3), this protein is Plasmepsin II.